The following is a 432-amino-acid chain: Glycosyltransferase 6 (432 aa).

At 1–18 (MGKPGGAKTRTAVCLSDG) the chain is on the cytoplasmic side. Residues 19-39 (VFFLAGAFMSLTLVWSYFSIF) form a helical; Signal-anchor for type II membrane protein membrane-spanning segment. Over 40-432 (SPSFTSLRHD…LPFDYPNEAW (393 aa)) the chain is Lumenal. Residue asparagine 315 is glycosylated (N-linked (GlcNAc...) asparagine).

It belongs to the glycosyltransferase 34 family.

The protein resides in the golgi apparatus membrane. In terms of biological role, probable glycosyltransferase that may be involved in the biosynthesis of xyloglucan. The protein is Glycosyltransferase 6 (GT6) of Arabidopsis thaliana (Mouse-ear cress).